A 156-amino-acid chain; its full sequence is Ribosomal RNA large subunit methyltransferase H (156 aa).

S-adenosyl-L-methionine-binding positions include L72, G104, and 123 to 128 (LSKMTL).

The protein belongs to the RNA methyltransferase RlmH family. In terms of assembly, homodimer.

The protein localises to the cytoplasm. The enzyme catalyses pseudouridine(1915) in 23S rRNA + S-adenosyl-L-methionine = N(3)-methylpseudouridine(1915) in 23S rRNA + S-adenosyl-L-homocysteine + H(+). Its function is as follows. Specifically methylates the pseudouridine at position 1915 (m3Psi1915) in 23S rRNA. In Maridesulfovibrio salexigens (strain ATCC 14822 / DSM 2638 / NCIMB 8403 / VKM B-1763) (Desulfovibrio salexigens), this protein is Ribosomal RNA large subunit methyltransferase H.